Consider the following 594-residue polypeptide: UvrABC system protein C (594 aa).

The GIY-YIG domain maps to 14-91; that stretch reads DQPGCYLMKD…IKKHDPKYNI (78 aa). One can recognise a UVR domain in the interval 196 to 231; the sequence is KEVRSELETKMYEASEKLEFERAKELRDQIAHIDAI.

Belongs to the UvrC family. As to quaternary structure, interacts with UvrB in an incision complex.

It is found in the cytoplasm. Functionally, the UvrABC repair system catalyzes the recognition and processing of DNA lesions. UvrC both incises the 5' and 3' sides of the lesion. The N-terminal half is responsible for the 3' incision and the C-terminal half is responsible for the 5' incision. This Bacillus anthracis (strain A0248) protein is UvrABC system protein C.